We begin with the raw amino-acid sequence, 451 residues long: Eukaryotic translation initiation factor 3 subunit E (451 aa).

Residues 256 to 425 (TDLFFSPAYI…GTVIMNHPPQ (170 aa)) enclose the PCI domain.

It belongs to the eIF-3 subunit E family. Component of the eukaryotic translation initiation factor 3 (eIF-3) complex.

It is found in the cytoplasm. Component of the eukaryotic translation initiation factor 3 (eIF-3) complex, which is involved in protein synthesis of a specialized repertoire of mRNAs and, together with other initiation factors, stimulates binding of mRNA and methionyl-tRNAi to the 40S ribosome. The eIF-3 complex specifically targets and initiates translation of a subset of mRNAs involved in cell proliferation. In Aspergillus oryzae (strain ATCC 42149 / RIB 40) (Yellow koji mold), this protein is Eukaryotic translation initiation factor 3 subunit E (int6).